A 208-amino-acid chain; its full sequence is Probable Brix domain-containing ribosomal biogenesis protein (208 aa).

Positions 1-196 constitute a Brix domain; sequence MMLITTSHRP…IWIMEDGRRW (196 aa).

Its function is as follows. Probably involved in the biogenesis of the ribosome. This is Probable Brix domain-containing ribosomal biogenesis protein from Thermococcus kodakarensis (strain ATCC BAA-918 / JCM 12380 / KOD1) (Pyrococcus kodakaraensis (strain KOD1)).